We begin with the raw amino-acid sequence, 244 residues long: Small ribosomal subunit protein uS3 (244 aa).

The KH type-2 domain maps to 39 to 107; that stretch reads MRKFVMSELK…ETHLNIVEVR (69 aa). Positions 214-244 are disordered; it reads ASERRALEGDAQGPASRERDRGDRRRERDNA. A compositionally biased stretch (basic and acidic residues) spans 229–244; sequence SRERDRGDRRRERDNA.

Belongs to the universal ribosomal protein uS3 family. In terms of assembly, part of the 30S ribosomal subunit. Forms a tight complex with proteins S10 and S14.

Binds the lower part of the 30S subunit head. Binds mRNA in the 70S ribosome, positioning it for translation. The chain is Small ribosomal subunit protein uS3 from Rhizobium etli (strain CIAT 652).